The primary structure comprises 296 residues: Glycine--tRNA ligase alpha subunit (296 aa).

The protein belongs to the class-II aminoacyl-tRNA synthetase family. In terms of assembly, tetramer of two alpha and two beta subunits.

It is found in the cytoplasm. The enzyme catalyses tRNA(Gly) + glycine + ATP = glycyl-tRNA(Gly) + AMP + diphosphate. In Synechococcus sp. (strain WH7803), this protein is Glycine--tRNA ligase alpha subunit.